The following is a 388-amino-acid chain: Gastricsin (388 aa).

The signal sequence occupies residues 1–16 (MKWMVVAFICLQLLEA). Positions 17-59 (TVVKVPLKKFKSIRETMKEKGLLWEFLKTHKHDPARKYRVSDL) are cleaved as a propeptide — activation peptide. In terms of domain architecture, Peptidase A1 spans 73–385 (YFGEISIGTP…DLGNNRVGFA (313 aa)). Asp91 is an active-site residue. Cystine bridges form between Cys104–Cys109 and Cys267–Cys271. Residue Asp276 is part of the active site. Cys310 and Cys343 form a disulfide bridge.

It belongs to the peptidase A1 family.

The protein localises to the secreted. It catalyses the reaction More restricted specificity than pepsin A, but shows preferential cleavage at Tyr-|-Xaa bonds. High activity on hemoglobin.. With respect to regulation, inhibited by pepstatin. Its function is as follows. Hydrolyzes a variety of proteins. This Callithrix jacchus (White-tufted-ear marmoset) protein is Gastricsin (PGC).